The sequence spans 529 residues: Probable serine carboxypeptidase ARB_06414 (529 aa).

An N-terminal signal peptide occupies residues 1-19 (MRGLSYFVLALSAIDAAAA). The segment at 171–191 (PTDDNPSRPVGTGFSQGKPSV) is disordered. Residue serine 225 is part of the active site. N-linked (GlcNAc...) asparagine glycosylation is found at asparagine 284 and asparagine 377. Residue aspartate 434 is part of the active site. Residues asparagine 440 and asparagine 448 are each glycosylated (N-linked (GlcNAc...) asparagine). Histidine 503 is an active-site residue.

This sequence belongs to the peptidase S10 family.

The protein localises to the secreted. Removes acidic, neutral and basic amino acids as well as proline from the C-terminal position. In Arthroderma benhamiae (strain ATCC MYA-4681 / CBS 112371) (Trichophyton mentagrophytes), this protein is Probable serine carboxypeptidase ARB_06414.